The sequence spans 227 residues: ATP synthase F(0) complex subunit a (227 aa).

6 helical membrane passes run 12 to 32, 69 to 89, 98 to 118, 132 to 152, 180 to 200, and 202 to 222; these read PTYL…ILFP, WAVL…LGLL, QLSL…IIGM, EGTP…SLFI, FVLM…LFLL, and LLEI…LSLY.

It belongs to the ATPase A chain family. As to quaternary structure, component of the ATP synthase complex composed at least of ATP5F1A/subunit alpha, ATP5F1B/subunit beta, ATP5MC1/subunit c (homooctomer), MT-ATP6/subunit a, MT-ATP8/subunit 8, ATP5ME/subunit e, ATP5MF/subunit f, ATP5MG/subunit g, ATP5MK/subunit k, ATP5MJ/subunit j, ATP5F1C/subunit gamma, ATP5F1D/subunit delta, ATP5F1E/subunit epsilon, ATP5PF/subunit F6, ATP5PB/subunit b, ATP5PD/subunit d, ATP5PO/subunit OSCP. ATP synthase complex consists of a soluble F(1) head domain (subunits alpha(3) and beta(3)) - the catalytic core - and a membrane F(0) domain - the membrane proton channel (subunits c, a, 8, e, f, g, k and j). These two domains are linked by a central stalk (subunits gamma, delta, and epsilon) rotating inside the F1 region and a stationary peripheral stalk (subunits F6, b, d, and OSCP). Interacts with DNAJC30; interaction is direct.

Its subcellular location is the mitochondrion inner membrane. It carries out the reaction H(+)(in) = H(+)(out). Subunit a, of the mitochondrial membrane ATP synthase complex (F(1)F(0) ATP synthase or Complex V) that produces ATP from ADP in the presence of a proton gradient across the membrane which is generated by electron transport complexes of the respiratory chain. ATP synthase complex consist of a soluble F(1) head domain - the catalytic core - and a membrane F(1) domain - the membrane proton channel. These two domains are linked by a central stalk rotating inside the F(1) region and a stationary peripheral stalk. During catalysis, ATP synthesis in the catalytic domain of F(1) is coupled via a rotary mechanism of the central stalk subunits to proton translocation. With the subunit c (ATP5MC1), forms the proton-conducting channel in the F(0) domain, that contains two crucial half-channels (inlet and outlet) that facilitate proton movement from the mitochondrial intermembrane space (IMS) into the matrix. Protons are taken up via the inlet half-channel and released through the outlet half-channel, following a Grotthuss mechanism. The sequence is that of ATP synthase F(0) complex subunit a from Salmo salar (Atlantic salmon).